The following is a 476-amino-acid chain: ATP synthase subunit beta (476 aa).

154–161 (GGAGVGKT) is a binding site for ATP.

This sequence belongs to the ATPase alpha/beta chains family. F-type ATPases have 2 components, CF(1) - the catalytic core - and CF(0) - the membrane proton channel. CF(1) has five subunits: alpha(3), beta(3), gamma(1), delta(1), epsilon(1). CF(0) has four main subunits: a(1), b(1), b'(1) and c(9-12).

The protein resides in the cell inner membrane. It carries out the reaction ATP + H2O + 4 H(+)(in) = ADP + phosphate + 5 H(+)(out). Functionally, produces ATP from ADP in the presence of a proton gradient across the membrane. The catalytic sites are hosted primarily by the beta subunits. This Rhodopseudomonas palustris (strain BisA53) protein is ATP synthase subunit beta.